Here is a 324-residue protein sequence, read N- to C-terminus: Probable pectinesterase A (324 aa).

An N-terminal signal peptide occupies residues 1–19 (MHGSLLKLALLSFSLASSA). Q142 is a binding site for substrate. D165 acts as the Proton donor in catalysis. Catalysis depends on D186, which acts as the Nucleophile. Substrate is bound by residues R246 and W248. An N-linked (GlcNAc...) asparagine glycan is attached at N285.

It belongs to the pectinesterase family.

It localises to the secreted. It carries out the reaction [(1-&gt;4)-alpha-D-galacturonosyl methyl ester](n) + n H2O = [(1-&gt;4)-alpha-D-galacturonosyl](n) + n methanol + n H(+). Its pathway is glycan metabolism; pectin degradation; 2-dehydro-3-deoxy-D-gluconate from pectin: step 1/5. Involved in maceration and soft-rotting of plant tissue. The sequence is that of Probable pectinesterase A (pmeA) from Aspergillus flavus (strain ATCC 200026 / FGSC A1120 / IAM 13836 / NRRL 3357 / JCM 12722 / SRRC 167).